The following is a 340-amino-acid chain: Uroporphyrinogen decarboxylase (340 aa).

Residues 21–25, F40, D71, Y148, S203, and H316 each bind substrate; that span reads RQAGR.

This sequence belongs to the uroporphyrinogen decarboxylase family. Homodimer.

The protein resides in the cytoplasm. The enzyme catalyses uroporphyrinogen III + 4 H(+) = coproporphyrinogen III + 4 CO2. Its pathway is porphyrin-containing compound metabolism; protoporphyrin-IX biosynthesis; coproporphyrinogen-III from 5-aminolevulinate: step 4/4. Its function is as follows. Catalyzes the decarboxylation of four acetate groups of uroporphyrinogen-III to yield coproporphyrinogen-III. This chain is Uroporphyrinogen decarboxylase, found in Campylobacter jejuni subsp. jejuni serotype O:2 (strain ATCC 700819 / NCTC 11168).